A 762-amino-acid chain; its full sequence is Poly(A) RNA polymerase CID14 (762 aa).

Residues 1–123 (MPTGFQPAES…KKEEQKAAER (123 aa)) are disordered. Positions 50–62 (KKNKKDKKKKGSK) are enriched in basic residues. Composition is skewed to basic and acidic residues over residues 65–75 (QPVDEPDKKDG) and 99–123 (RKRD…AAER). Position 189 (Ser-189) interacts with ATP. Residues Asp-200 and Asp-202 each coordinate Mg(2+). Positions 266, 291, 309, and 310 each coordinate ATP. A PAP-associated domain is found at 336–393 (NLGTLLIEFFELFGRNFNYNDVGISIRRGGFYFSKASRGWMKGQSFLLSIEDPQDKDN). Positions 482 to 762 (SIPLGADPKP…LGQSSGDMSD (281 aa)) are disordered. Over residues 536-549 (VEDDELESDDDSDS) the composition is skewed to acidic residues. Polar residues predominate over residues 572-581 (RTANSRSTSR). Lys-610 contacts ATP. Composition is skewed to acidic residues over residues 677-687 (GEEEEEIDSDE) and 697-707 (SDGDLGSEDEI). The span at 753-762 (LGQSSGDMSD) shows a compositional bias: polar residues.

It belongs to the DNA polymerase type-B-like family. In terms of assembly, component of the TRAMP complex. Mg(2+) serves as cofactor. Mn(2+) is required as a cofactor.

The protein resides in the nucleus. Its subcellular location is the nucleolus. The catalysed reaction is RNA(n) + ATP = RNA(n)-3'-adenine ribonucleotide + diphosphate. In terms of biological role, required for 3' polyadenylation of the 5.8S and 25S rRNAs as a prelude to their degradation in the exosome. Involved in the nucleolar organization to ensure faithful chromosome segregation during mitosis. The protein is Poly(A) RNA polymerase CID14 of Cryptococcus neoformans var. neoformans serotype D (strain JEC21 / ATCC MYA-565) (Filobasidiella neoformans).